A 511-amino-acid polypeptide reads, in one-letter code: Cytochrome P450 93B2 (511 aa).

The helical transmembrane segment at 4–24 (LQLIFLLFFFPTLLFLYCLPY) threads the bilayer. Cys447 contributes to the heme binding site.

This sequence belongs to the cytochrome P450 family. Heme serves as cofactor.

The protein resides in the membrane. The catalysed reaction is a flavanone + reduced [NADPH--hemoprotein reductase] + O2 = a flavone + oxidized [NADPH--hemoprotein reductase] + 2 H2O + H(+). It participates in secondary metabolite biosynthesis; flavonoid biosynthesis. Functionally, functions as a flavone synthase II (FNSII) that catalyzes the direct conversion of flavanones to flavones. In vitro, can convert liquiritigenin, naringenin and eriodictyol to 7,4'-dihydroxyflavone, apigenin and luteolin, respectively. In Gerbera hybrida (Daisy), this protein is Cytochrome P450 93B2.